The sequence spans 273 residues: Small ribosomal subunit protein uS2 (273 aa).

Positions 244–273 are disordered; it reads SDEEANSSAEENENRQEDLLAKKYDSSEAN. Basic and acidic residues predominate over residues 255–273; it reads NENRQEDLLAKKYDSSEAN.

Belongs to the universal ribosomal protein uS2 family.

The protein is Small ribosomal subunit protein uS2 of Chlamydia felis (strain Fe/C-56) (Chlamydophila felis).